Here is an 860-residue protein sequence, read N- to C-terminus: Alanine--tRNA ligase (860 aa).

Histidine 553, histidine 557, cysteine 655, and histidine 659 together coordinate Zn(2+).

The protein belongs to the class-II aminoacyl-tRNA synthetase family. Zn(2+) is required as a cofactor.

It localises to the cytoplasm. It carries out the reaction tRNA(Ala) + L-alanine + ATP = L-alanyl-tRNA(Ala) + AMP + diphosphate. In terms of biological role, catalyzes the attachment of alanine to tRNA(Ala) in a two-step reaction: alanine is first activated by ATP to form Ala-AMP and then transferred to the acceptor end of tRNA(Ala). Also edits incorrectly charged Ser-tRNA(Ala) and Gly-tRNA(Ala) via its editing domain. This chain is Alanine--tRNA ligase, found in Legionella pneumophila (strain Corby).